Consider the following 170-residue polypeptide: Large ribosomal subunit protein uL10 (170 aa).

The protein belongs to the universal ribosomal protein uL10 family. As to quaternary structure, part of the ribosomal stalk of the 50S ribosomal subunit. The N-terminus interacts with L11 and the large rRNA to form the base of the stalk. The C-terminus forms an elongated spine to which L12 dimers bind in a sequential fashion forming a multimeric L10(L12)X complex.

Forms part of the ribosomal stalk, playing a central role in the interaction of the ribosome with GTP-bound translation factors. This Chlamydia abortus (strain DSM 27085 / S26/3) (Chlamydophila abortus) protein is Large ribosomal subunit protein uL10.